Consider the following 229-residue polypeptide: Interleukin-27 subunit beta (229 aa).

The signal sequence occupies residues 1–20 (MTPQLLLALVLWASCPPCSG). Fibronectin type-III domains lie at 24-130 (PPAA…IKPD) and 131-227 (PPEG…TMSL). Asn55 and Asn105 each carry an N-linked (GlcNAc...) asparagine glycan.

It belongs to the type I cytokine receptor family. Type 3 subfamily. Heterodimer with IL27/IL27A; not disulfide-linked. This heterodimer is known as interleukin IL-27. Heterodimer with IL12A; not disulfide-linked. This heterodimer is known as interleukin IL-35. Interacts with SQSTM1.

The protein localises to the secreted. Its function is as follows. Associates with IL27 to form the IL-27 interleukin, a heterodimeric cytokine which functions in innate immunity. IL-27 has pro- and anti-inflammatory properties, that can regulate T-helper cell development, suppress T-cell proliferation, stimulate cytotoxic T-cell activity, induce isotype switching in B-cells, and that has diverse effects on innate immune cells. Among its target cells are CD4 T-helper cells which can differentiate in type 1 effector cells (TH1), type 2 effector cells (TH2) and IL17 producing helper T-cells (TH17). It drives rapid clonal expansion of naive but not memory CD4 T-cells. It also strongly synergizes with IL-12 to trigger interferon-gamma/IFN-gamma production of naive CD4 T-cells, binds to the cytokine receptor WSX-1/TCCR. Another important role of IL-27 is its antitumor activity as well as its antiangiogenic activity with activation of production of antiangiogenic chemokines. This Homo sapiens (Human) protein is Interleukin-27 subunit beta (EBI3).